A 782-amino-acid chain; its full sequence is Probable cyclic di-GMP phosphodiesterase PdeI (782 aa).

Transmembrane regions (helical) follow at residues 12 to 32 (LIIL…IINY) and 286 to 306 (LFYL…LMTT). One can recognise an EAL domain in the interval 527-781 (NIWIARNIRH…AWDKSGKLVK (255 aa)).

Its subcellular location is the cell membrane. The catalysed reaction is 3',3'-c-di-GMP + H2O = 5'-phosphoguanylyl(3'-&gt;5')guanosine + H(+). Its function is as follows. Phosphodiesterase (PDE) that catalyzes the hydrolysis of cyclic-di-GMP (c-di-GMP) to 5'-pGpG. Overexpression reduces biofilm formation. Cyclic-di-GMP is a second messenger which controls cell surface-associated traits in bacteria. This Escherichia coli (strain K12) protein is Probable cyclic di-GMP phosphodiesterase PdeI.